The following is a 69-amino-acid chain: DNA-directed RNA polymerase subunit omega (69 aa).

The protein belongs to the RNA polymerase subunit omega family. As to quaternary structure, the RNAP catalytic core consists of 2 alpha, 1 beta, 1 beta' and 1 omega subunit. When a sigma factor is associated with the core the holoenzyme is formed, which can initiate transcription.

The catalysed reaction is RNA(n) + a ribonucleoside 5'-triphosphate = RNA(n+1) + diphosphate. In terms of biological role, promotes RNA polymerase assembly. Latches the N- and C-terminal regions of the beta' subunit thereby facilitating its interaction with the beta and alpha subunits. In Carboxydothermus hydrogenoformans (strain ATCC BAA-161 / DSM 6008 / Z-2901), this protein is DNA-directed RNA polymerase subunit omega.